Reading from the N-terminus, the 169-residue chain is S-ribosylhomocysteine lyase (169 aa).

3 residues coordinate Fe cation: histidine 54, histidine 58, and cysteine 129.

Belongs to the LuxS family. In terms of assembly, homodimer. It depends on Fe cation as a cofactor.

It catalyses the reaction S-(5-deoxy-D-ribos-5-yl)-L-homocysteine = (S)-4,5-dihydroxypentane-2,3-dione + L-homocysteine. Involved in the synthesis of autoinducer 2 (AI-2) which is secreted by bacteria and is used to communicate both the cell density and the metabolic potential of the environment. The regulation of gene expression in response to changes in cell density is called quorum sensing. Catalyzes the transformation of S-ribosylhomocysteine (RHC) to homocysteine (HC) and 4,5-dihydroxy-2,3-pentadione (DPD). The protein is S-ribosylhomocysteine lyase of Actinobacillus pleuropneumoniae serotype 5b (strain L20).